A 396-amino-acid polypeptide reads, in one-letter code: S-adenosylmethionine synthase (396 aa).

His-16 lines the ATP pocket. Mg(2+) is bound at residue Asp-18. Position 44 (Glu-44) interacts with K(+). L-methionine-binding residues include Glu-57 and Gln-100. The flexible loop stretch occupies residues 100 to 110; that stretch reads QSVDIAQGVDR. Residues 165–167, Asp-240, 246–247, Ala-263, and Lys-267 each bind ATP; these read DAK and RK. Asp-240 provides a ligand contact to L-methionine. Lys-271 serves as a coordination point for L-methionine.

This sequence belongs to the AdoMet synthase family. In terms of assembly, homotetramer; dimer of dimers. It depends on Mg(2+) as a cofactor. Requires K(+) as cofactor.

It localises to the cytoplasm. It catalyses the reaction L-methionine + ATP + H2O = S-adenosyl-L-methionine + phosphate + diphosphate. It participates in amino-acid biosynthesis; S-adenosyl-L-methionine biosynthesis; S-adenosyl-L-methionine from L-methionine: step 1/1. Catalyzes the formation of S-adenosylmethionine (AdoMet) from methionine and ATP. The overall synthetic reaction is composed of two sequential steps, AdoMet formation and the subsequent tripolyphosphate hydrolysis which occurs prior to release of AdoMet from the enzyme. This chain is S-adenosylmethionine synthase, found in Pseudomonas putida (strain W619).